Consider the following 273-residue polypeptide: Putative pyruvate, phosphate dikinase regulatory protein (273 aa).

ADP is bound at residue 149-156 (GPSRTSKT).

It belongs to the pyruvate, phosphate/water dikinase regulatory protein family. PDRP subfamily.

It carries out the reaction N(tele)-phospho-L-histidyl/L-threonyl-[pyruvate, phosphate dikinase] + ADP = N(tele)-phospho-L-histidyl/O-phospho-L-threonyl-[pyruvate, phosphate dikinase] + AMP + H(+). The catalysed reaction is N(tele)-phospho-L-histidyl/O-phospho-L-threonyl-[pyruvate, phosphate dikinase] + phosphate + H(+) = N(tele)-phospho-L-histidyl/L-threonyl-[pyruvate, phosphate dikinase] + diphosphate. Bifunctional serine/threonine kinase and phosphorylase involved in the regulation of the pyruvate, phosphate dikinase (PPDK) by catalyzing its phosphorylation/dephosphorylation. In Rickettsia canadensis (strain McKiel), this protein is Putative pyruvate, phosphate dikinase regulatory protein.